Here is a 477-residue protein sequence, read N- to C-terminus: Probable F-box protein At5g25300 (477 aa).

The stretch at 346–377 (VDMNKEDSQIEINEKETKINQEHDQSDETQAK) forms a coiled coil. Residues 412–458 (SPPWSELPGDILRSVFERLSFVDFQRAKQTCPIKRSKSNCLRLWLIT) enclose the F-box domain.

This is Probable F-box protein At5g25300 from Arabidopsis thaliana (Mouse-ear cress).